A 218-amino-acid polypeptide reads, in one-letter code: Octanoyltransferase (218 aa).

The 177-residue stretch at 31–207 (AQTPDELWLL…QLAAQLGYAE (177 aa)) folds into the BPL/LPL catalytic domain. Substrate contacts are provided by residues 70–77 (RGGQVTYH), 137–139 (SLG), and 150–152 (GLA). Residue cysteine 168 is the Acyl-thioester intermediate of the active site.

The protein belongs to the LipB family.

It is found in the cytoplasm. The catalysed reaction is octanoyl-[ACP] + L-lysyl-[protein] = N(6)-octanoyl-L-lysyl-[protein] + holo-[ACP] + H(+). Its pathway is protein modification; protein lipoylation via endogenous pathway; protein N(6)-(lipoyl)lysine from octanoyl-[acyl-carrier-protein]: step 1/2. Its function is as follows. Catalyzes the transfer of endogenously produced octanoic acid from octanoyl-acyl-carrier-protein onto the lipoyl domains of lipoate-dependent enzymes. Lipoyl-ACP can also act as a substrate although octanoyl-ACP is likely to be the physiological substrate. This chain is Octanoyltransferase, found in Azotobacter vinelandii (strain DJ / ATCC BAA-1303).